A 286-amino-acid chain; its full sequence is ATP synthase gamma chain (286 aa).

It belongs to the ATPase gamma chain family. F-type ATPases have 2 components, CF(1) - the catalytic core - and CF(0) - the membrane proton channel. CF(1) has five subunits: alpha(3), beta(3), gamma(1), delta(1), epsilon(1). CF(0) has three main subunits: a, b and c.

It is found in the cell membrane. Its function is as follows. Produces ATP from ADP in the presence of a proton gradient across the membrane. The gamma chain is believed to be important in regulating ATPase activity and the flow of protons through the CF(0) complex. This chain is ATP synthase gamma chain, found in Bacillus cereus (strain G9842).